The primary structure comprises 474 residues: JmjC domain-containing protein F (474 aa).

Residues 247 to 269 (KTKKQQQQQQTTTTTANNDNDNS) are disordered. The span at 251–261 (QQQQQQTTTTT) shows a compositional bias: low complexity. The region spanning 305–474 (AYLAQHGLIE…LSLSFWFIKK (170 aa)) is the JmjC domain.

This Dictyostelium discoideum (Social amoeba) protein is JmjC domain-containing protein F (jcdF).